A 264-amino-acid chain; its full sequence is Ribosomal RNA small subunit methyltransferase J (264 aa).

Residues 111–112, 127–128, and aspartate 180 contribute to the S-adenosyl-L-methionine site; these read RD and ER.

The protein belongs to the methyltransferase superfamily. RsmJ family.

The protein localises to the cytoplasm. The catalysed reaction is guanosine(1516) in 16S rRNA + S-adenosyl-L-methionine = N(2)-methylguanosine(1516) in 16S rRNA + S-adenosyl-L-homocysteine + H(+). Its function is as follows. Specifically methylates the guanosine in position 1516 of 16S rRNA. In Alkalilimnicola ehrlichii (strain ATCC BAA-1101 / DSM 17681 / MLHE-1), this protein is Ribosomal RNA small subunit methyltransferase J.